Consider the following 138-residue polypeptide: Large ribosomal subunit protein uL29 (138 aa).

The large ribosomal subunit protein uL29 stretch occupies residues 1-79 (MAKSKMLDLR…TNKVIKADYN (79 aa)). Positions 80–138 (KAVEEAEKAGKEVRAKQRKFLEEQYGQQSQTKVNEADIQKAMQAAEQETVEPDTKGETK) are unknown. Positions 103–138 (QYGQQSQTKVNEADIQKAMQAAEQETVEPDTKGETK) are disordered.

The protein belongs to the universal ribosomal protein uL29 family.

The protein is Large ribosomal subunit protein uL29 of Mycoplasma capricolum subsp. capricolum (strain California kid / ATCC 27343 / NCTC 10154).